Reading from the N-terminus, the 159-residue chain is UPF0225 protein plu2503 (159 aa).

It belongs to the UPF0225 family.

The chain is UPF0225 protein plu2503 from Photorhabdus laumondii subsp. laumondii (strain DSM 15139 / CIP 105565 / TT01) (Photorhabdus luminescens subsp. laumondii).